The primary structure comprises 384 residues: Lipid-A-disaccharide synthase (384 aa).

Belongs to the LpxB family.

It carries out the reaction a lipid X + a UDP-2-N,3-O-bis[(3R)-3-hydroxyacyl]-alpha-D-glucosamine = a lipid A disaccharide + UDP + H(+). It participates in bacterial outer membrane biogenesis; LPS lipid A biosynthesis. Condensation of UDP-2,3-diacylglucosamine and 2,3-diacylglucosamine-1-phosphate to form lipid A disaccharide, a precursor of lipid A, a phosphorylated glycolipid that anchors the lipopolysaccharide to the outer membrane of the cell. This is Lipid-A-disaccharide synthase from Gloeothece citriformis (strain PCC 7424) (Cyanothece sp. (strain PCC 7424)).